A 660-amino-acid chain; its full sequence is DNA mismatch repair protein MutL (660 aa).

Disordered stretches follow at residues 368–426 (PQQT…PTKK) and 439–461 (NREQRESTSQVNEQSHTFRSTQQ). A compositionally biased stretch (low complexity) spans 406–417 (SSSSNSTAPSRS).

It belongs to the DNA mismatch repair MutL/HexB family.

Its function is as follows. This protein is involved in the repair of mismatches in DNA. It is required for dam-dependent methyl-directed DNA mismatch repair. May act as a 'molecular matchmaker', a protein that promotes the formation of a stable complex between two or more DNA-binding proteins in an ATP-dependent manner without itself being part of a final effector complex. The polypeptide is DNA mismatch repair protein MutL (Aliivibrio fischeri (strain ATCC 700601 / ES114) (Vibrio fischeri)).